Consider the following 293-residue polypeptide: Nucleotide-binding protein Bcer98_3698 (293 aa).

14–21 (GMSGAGKT) contributes to the ATP binding site. Residue 65–68 (DLRG) participates in GTP binding.

The protein belongs to the RapZ-like family.

Functionally, displays ATPase and GTPase activities. This is Nucleotide-binding protein Bcer98_3698 from Bacillus cytotoxicus (strain DSM 22905 / CIP 110041 / 391-98 / NVH 391-98).